A 148-amino-acid chain; its full sequence is Ribonuclease H (148 aa).

The 142-residue stretch at 2 to 143 (TADIIYIYSD…ADVLANQGVL (142 aa)) folds into the RNase H type-1 domain. Residues Asp11, Glu49, Asp71, and Asp135 each coordinate Mg(2+).

Belongs to the RNase H family. In terms of assembly, monomer. Mg(2+) is required as a cofactor.

Its subcellular location is the cytoplasm. The enzyme catalyses Endonucleolytic cleavage to 5'-phosphomonoester.. In terms of biological role, endonuclease that specifically degrades the RNA of RNA-DNA hybrids. This chain is Ribonuclease H, found in Thiobacillus denitrificans (strain ATCC 25259 / T1).